A 519-amino-acid polypeptide reads, in one-letter code: Glutamate--cysteine ligase (519 aa).

This sequence belongs to the glutamate--cysteine ligase type 1 family. Type 1 subfamily.

The enzyme catalyses L-cysteine + L-glutamate + ATP = gamma-L-glutamyl-L-cysteine + ADP + phosphate + H(+). The protein operates within sulfur metabolism; glutathione biosynthesis; glutathione from L-cysteine and L-glutamate: step 1/2. The polypeptide is Glutamate--cysteine ligase (Yersinia pseudotuberculosis serotype I (strain IP32953)).